The chain runs to 403 residues: Double C2-like domain-containing protein alpha (403 aa).

Positions 1–92 are interaction with UNC13D and DYNLT1; sequence MRGRRGDRMT…DSYDSDDTTA (92 aa). 2 C2 domains span residues 92–214 and 254–387; these read ALGT…HFNI and ERGR…ERWH. Ca(2+) contacts are provided by Asp123, Asp129, Asp184, Asp186, Asp285, Asp291, Asp345, Asp347, and Asp353. The tract at residues 218–403 is interaction with UNC13D; the sequence is RQVPLPSPSS…PPAAGALPLA (186 aa).

In terms of assembly, interacts (via N-terminus) with UNC13A. Interacts with cytoplasmic dynein light chain DYNLT1. Interacts with UNC13D. Requires Ca(2+) as cofactor. As to expression, predominantly expressed in brain. Also found in non-neural tissues. Expressed in RBL-2H3 mast cell line.

The protein resides in the cytoplasmic vesicle. It is found in the secretory vesicle. The protein localises to the synaptic vesicle membrane. It localises to the synapse. Its subcellular location is the synaptosome. The protein resides in the lysosome. In terms of biological role, calcium sensor which most probably regulates fusion of vesicles with membranes. Binds calcium and phospholipids. May be involved in calcium dependent neurotransmitter release through the interaction with UNC13A. May be involved in calcium-dependent spontaneous release of neurotransmitter in absence of action potentials in neuronal cells. Regulates Ca(2+)-dependent secretory lysosome exocytosis in mast cells. The protein is Double C2-like domain-containing protein alpha (Doc2a) of Rattus norvegicus (Rat).